Reading from the N-terminus, the 220-residue chain is Large ribosomal subunit protein uL3 (220 aa).

Residues 145–169 are disordered; the sequence is GPASHGSKFHRRPGSSGNRTWPGRV.

It belongs to the universal ribosomal protein uL3 family. In terms of assembly, part of the 50S ribosomal subunit. Forms a cluster with proteins L14 and L19.

Its function is as follows. One of the primary rRNA binding proteins, it binds directly near the 3'-end of the 23S rRNA, where it nucleates assembly of the 50S subunit. This chain is Large ribosomal subunit protein uL3, found in Bdellovibrio bacteriovorus (strain ATCC 15356 / DSM 50701 / NCIMB 9529 / HD100).